The sequence spans 58 residues: ATP synthase F(0) complex subunit k, mitochondrial (58 aa).

Lys-16 and Lys-17 each carry N6-acetyllysine; partial. A helical transmembrane segment spans residues Thr-23–Phe-45.

Component of the ATP synthase complex composed at least of ATP5F1A/subunit alpha, ATP5F1B/subunit beta, ATP5MC1/subunit c (homooctomer), MT-ATP6/subunit a, MT-ATP8/subunit 8, ATP5ME/subunit e, ATP5MF/subunit f, ATP5MG/subunit g, ATP5MK/subunit k, ATP5MJ/subunit j, ATP5F1C/subunit gamma, ATP5F1D/subunit delta, ATP5F1E/subunit epsilon, ATP5PF/subunit F6, ATP5PB/subunit b, ATP5PD/subunit d, ATP5PO/subunit OSCP. ATP synthase complex consists of a soluble F(1) head domain (subunits alpha(3) and beta(3)) - the catalytic core - and a membrane F(0) domain - the membrane proton channel (subunits c, a, 8, e, f, g, k and j). These two domains are linked by a central stalk (subunits gamma, delta, and epsilon) rotating inside the F1 region and a stationary peripheral stalk (subunits F6, b, d, and OSCP). The ATP synthase complex/complex V exists as a monomeric and a dimeric supercomplex that helps shape mitochondrial cristae to optimize proton flow.

Its subcellular location is the mitochondrion membrane. Functionally, subunit k, of the mitochondrial membrane ATP synthase complex (F(1)F(0) ATP synthase or Complex V) that produces ATP from ADP in the presence of a proton gradient across the membrane which is generated by electron transport complexes of the respiratory chain. ATP synthase complex consist of a soluble F(1) head domain - the catalytic core - and a membrane F(1) domain - the membrane proton channel. These two domains are linked by a central stalk rotating inside the F(1) region and a stationary peripheral stalk. During catalysis, ATP synthesis in the catalytic domain of F(1) is coupled via a rotary mechanism of the central stalk subunits to proton translocation. In vivo, can only synthesize ATP although its ATP hydrolase activity can be activated artificially in vitro. Part of the complex F(0) domain. Required for dimerization of the ATP synthase complex and as such regulates ATP synthesis in the mitochondria. This is ATP synthase F(0) complex subunit k, mitochondrial from Bos taurus (Bovine).